The sequence spans 391 residues: Polyketide synthase 5 (391 aa).

Cysteine 164 is a catalytic residue.

It belongs to the thiolase-like superfamily. Chalcone/stilbene synthases family. Homodimer. As to expression, expressed in fruits.

The enzyme catalyses (E)-4-coumaroyl-CoA + 3 malonyl-CoA + 3 H(+) = 2',4,4',6'-tetrahydroxychalcone + 3 CO2 + 4 CoA. The protein operates within secondary metabolite biosynthesis; flavonoid biosynthesis. Polyketide synthase producing naringenin chalcone. Can use p-coumaryl-CoA as substrate. This is Polyketide synthase 5 (PKS5) from Rubus idaeus (Raspberry).